Here is an 83-residue protein sequence, read N- to C-terminus: Hainantoxin-III 12 (83 aa).

Residues 1–21 (MKASMFLALAGLVLLFVVGYA) form the signal peptide. Residues 22-48 (SGSEEKEFPRELLSKIFAVDDFKGEER) constitute a propeptide that is removed on maturation. 3 disulfide bridges follow: Cys50/Cys65, Cys57/Cys70, and Cys64/Cys77. Leu81 is subject to Leucine amide.

Belongs to the neurotoxin 10 (Hwtx-1) family. 15 (Hntx-3) subfamily. In terms of assembly, monomer. As to expression, expressed by the venom gland.

The protein resides in the secreted. Selective antagonist of neuronal tetrodotoxin (TTX)-sensitive voltage-gated sodium channels (IC(50)=1270 nM on Nav1.1/SCN1A, 270 nM on Nav1.2/SCN2A, 491 nM on Nav1.3/SCN3A and 232 nM on Nav1.7/SCN9A). This toxin suppress Nav1.7 current amplitude without significantly altering the activation, inactivation, and repriming kinetics. Short extreme depolarizations partially activate the toxin-bound channel, indicating voltage-dependent inhibition of this toxin. This toxin increases the deactivation of the Nav1.7 current after extreme depolarizations. The toxin-Nav1.7 complex is gradually dissociated upon prolonged strong depolarizations in a voltage-dependent manner, and the unbound toxin rebinds to Nav1.7 after a long repolarization. Moreover, analysis of chimeric channels showed that the DIIS3-S4 linker is critical for toxin binding to Nav1.7. These data are consistent with this toxin interacting with Nav1.7 site 4 and trapping the domain II voltage sensor in the closed state. This Cyriopagopus hainanus (Chinese bird spider) protein is Hainantoxin-III 12.